Here is a 341-residue protein sequence, read N- to C-terminus: Gibberellin 2-beta-dioxygenase 2 (341 aa).

Residues K179 to P283 form the Fe2OG dioxygenase domain. Fe cation-binding residues include H207, D209, and H264. Residue R274 is part of the active site. R274 lines the 2-oxoglutarate pocket.

Belongs to the iron/ascorbate-dependent oxidoreductase family. GA2OX subfamily. It depends on Fe(2+) as a cofactor. As to expression, preferentially expressed in flowers, siliques, and upper stems. Expressed in cotyledons, at the base of the shoot apical meristem and developing leaf primordia.

It carries out the reaction gibberellin A1 + 2-oxoglutarate + O2 = gibberellin A8 + succinate + CO2. It functions in the pathway plant hormone biosynthesis; gibberellin biosynthesis. Catalyzes the 2-beta-hydroxylation of several biologically active gibberellins, leading to the homeostatic regulation of their endogenous level. Catabolism of gibberellins (GAs) plays a central role in plant development. Converts GA9/GA20 to GA51/GA29 and GA4/GA1 to GA34/GA8. This Arabidopsis thaliana (Mouse-ear cress) protein is Gibberellin 2-beta-dioxygenase 2 (GA2OX2).